The primary structure comprises 1015 residues: Condensin complex subunit 3 (1015 aa).

HEAT repeat units lie at residues 94-131 (GLLNYLFTFLLKSHEANSNAVRFRVCLLINKLLGSMPE), 138-173 (DVFDKINKAMLIRLKDKIPNVRIQAVLALSRLQDPK), 174-212 (DDECPVVNAYATLIENDSNPEVRRAVLSCIAPSAKTLPK), 238-275 (MRAMSIAQRVMLLQQGLNDRSDAVKQAMQKHLLQGWLR), and 276-313 (FSEGNILELLHRLDVENSSEVAVSVLNALFSITPLSEL). A Phosphoserine modification is found at serine 390. 3 HEAT repeats span residues 399–436 (EFIGQQLILIIKSLDTSEEGGRKKLLAVLQEILILPTI), 439–478 (SLVSFLVERLLHIIIDDNKRTQIVTEIISEIRAPIVTVGV), and 617–654 (DFARKHFVLLLQVLQIDDVTIKISALKAIFDQLMTFGI). Serine 674 is modified (phosphoserine). 2 HEAT repeats span residues 687–724 (ATAKNVLKLLSDFLDSEVSELRTGAAEGLAKLMFSGLL) and 865–907 (KDLL…QAEA). Threonine 931 is modified (phosphothreonine). Positions 941–950 (ASKSTQLKTN) are enriched in polar residues. The tract at residues 941–994 (ASKSTQLKTNRGQRKVTVSARTNRRCQTAEADSESDHEVPEPESEMKMRLPRRA) is disordered. A phosphoserine mark is found at serine 973, serine 975, serine 1002, and serine 1015. Over residues 974 to 988 (ESDHEVPEPESEMKM) the composition is skewed to basic and acidic residues.

This sequence belongs to the CND3 (condensin subunit 3) family. In terms of assembly, component of the condensin complex, which contains the SMC2 and SMC4 heterodimer, and three non SMC subunits that probably regulate the complex: NCAPH/BRRN1, NCAPD2/CAPD2 and NCAPG. Phosphorylated by CDK1. Its phosphorylation, as well as that of NCAPD2 and NCAPH subunits, activates the condensin complex and is required for chromosome condensation. Highly expressed in testis.

The protein localises to the nucleus. Its subcellular location is the cytoplasm. It is found in the chromosome. Regulatory subunit of the condensin complex, a complex required for conversion of interphase chromatin into mitotic-like condense chromosomes. The condensin complex probably introduces positive supercoils into relaxed DNA in the presence of type I topoisomerases and converts nicked DNA into positive knotted forms in the presence of type II topoisomerases. The sequence is that of Condensin complex subunit 3 (NCAPG) from Homo sapiens (Human).